The primary structure comprises 572 residues: Methionine--tRNA ligase (572 aa).

Positions 11 to 21 match the 'HIGH' region motif; it reads PYINGIKHLGN. Zn(2+) is bound by residues Cys-143, Cys-146, Cys-156, and Cys-159. Positions 346–350 match the 'KMSKS' region motif; it reads QFSTS. Thr-349 contributes to the ATP binding site.

This sequence belongs to the class-I aminoacyl-tRNA synthetase family. MetG type 1 subfamily. Monomer. Requires Zn(2+) as cofactor.

The protein localises to the cytoplasm. It catalyses the reaction tRNA(Met) + L-methionine + ATP = L-methionyl-tRNA(Met) + AMP + diphosphate. In terms of biological role, is required not only for elongation of protein synthesis but also for the initiation of all mRNA translation through initiator tRNA(fMet) aminoacylation. The protein is Methionine--tRNA ligase of Dinoroseobacter shibae (strain DSM 16493 / NCIMB 14021 / DFL 12).